Reading from the N-terminus, the 230-residue chain is Ribonuclease 3 (230 aa).

The 128-residue stretch at 8–135 (IVELKEKLGI…LIGAVYLQTN (128 aa)) folds into the RNase III domain. Glu48 contributes to the Mg(2+) binding site. Residue Asp52 is part of the active site. Mg(2+)-binding residues include Asp121 and Glu124. Residue Glu124 is part of the active site. The DRBM domain occupies 161 to 230 (DYKTMIQELV…AHFAFQKLSK (70 aa)).

Belongs to the ribonuclease III family. In terms of assembly, homodimer. Mg(2+) serves as cofactor.

Its subcellular location is the cytoplasm. The catalysed reaction is Endonucleolytic cleavage to 5'-phosphomonoester.. Digests double-stranded RNA. Involved in the processing of primary rRNA transcript to yield the immediate precursors to the large and small rRNAs (23S and 16S). Processes some mRNAs, and tRNAs when they are encoded in the rRNA operon. Processes pre-crRNA and tracrRNA of type II CRISPR loci if present in the organism. The polypeptide is Ribonuclease 3 (Natranaerobius thermophilus (strain ATCC BAA-1301 / DSM 18059 / JW/NM-WN-LF)).